A 319-amino-acid polypeptide reads, in one-letter code: Ribosomal RNA large subunit methyltransferase F (319 aa).

The tract at residues 1–25 is disordered; sequence MAPFFSAMTSKKQSQGLPKGPHPDN. The segment covering 7–16 has biased composition (polar residues); that stretch reads AMTSKKQSQG.

Belongs to the methyltransferase superfamily. METTL16/RlmF family.

The protein resides in the cytoplasm. It carries out the reaction adenosine(1618) in 23S rRNA + S-adenosyl-L-methionine = N(6)-methyladenosine(1618) in 23S rRNA + S-adenosyl-L-homocysteine + H(+). Specifically methylates the adenine in position 1618 of 23S rRNA. The sequence is that of Ribosomal RNA large subunit methyltransferase F from Shewanella amazonensis (strain ATCC BAA-1098 / SB2B).